The chain runs to 257 residues: Flagellar brake protein YcgR 2 (257 aa).

Residues Q131–T244 form the PilZ domain.

This sequence belongs to the YcgR family. As to quaternary structure, monomer. Interacts with the flagellar basal bodies.

The protein resides in the bacterial flagellum basal body. Its function is as follows. Acts as a flagellar brake, regulating swimming and swarming in a bis-(3'-5') cyclic diguanylic acid (c-di-GMP)-dependent manner. Binds 1 c-di-GMP dimer per subunit. Increasing levels of c-di-GMP lead to decreased motility. This chain is Flagellar brake protein YcgR 2, found in Paraburkholderia phytofirmans (strain DSM 17436 / LMG 22146 / PsJN) (Burkholderia phytofirmans).